Reading from the N-terminus, the 106-residue chain is MAKSLRASSHLNAKSVKRRGVFQKAVDAREQRISDKLKEDLLKQKLEDLKKKEEQGIDMDVDEKKSNEEAPRKKISTSGWRDGRHHTYKKAKLMKQSKKKTSFTRF.

The span at 1 to 12 (MAKSLRASSHLN) shows a compositional bias: polar residues. 2 disordered regions span residues 1–21 (MAKS…RRGV) and 52–106 (KEEQ…FTRF). Residues 62–72 (DEKKSNEEAPR) are compositionally biased toward basic and acidic residues. Basic residues predominate over residues 83–106 (GRHHTYKKAKLMKQSKKKTSFTRF).

It belongs to the UPF0642 family.

The sequence is that of UPF0642 protein YBL028C from Saccharomyces cerevisiae (strain ATCC 204508 / S288c) (Baker's yeast).